A 120-amino-acid chain; its full sequence is Large ribosomal subunit protein uL18 (120 aa).

It belongs to the universal ribosomal protein uL18 family. In terms of assembly, part of the 50S ribosomal subunit; part of the 5S rRNA/L5/L18/L25 subcomplex. Contacts the 5S and 23S rRNAs.

This is one of the proteins that bind and probably mediate the attachment of the 5S RNA into the large ribosomal subunit, where it forms part of the central protuberance. This is Large ribosomal subunit protein uL18 from Picosynechococcus sp. (strain ATCC 27264 / PCC 7002 / PR-6) (Agmenellum quadruplicatum).